The chain runs to 160 residues: Cyclic pyranopterin monophosphate synthase (160 aa).

Substrate contacts are provided by residues 75–77 (LCH) and 113–114 (ME). Residue aspartate 128 is part of the active site.

Belongs to the MoaC family. Homohexamer; trimer of dimers.

It catalyses the reaction (8S)-3',8-cyclo-7,8-dihydroguanosine 5'-triphosphate = cyclic pyranopterin phosphate + diphosphate. It participates in cofactor biosynthesis; molybdopterin biosynthesis. Catalyzes the conversion of (8S)-3',8-cyclo-7,8-dihydroguanosine 5'-triphosphate to cyclic pyranopterin monophosphate (cPMP). In Haemophilus influenzae (strain PittEE), this protein is Cyclic pyranopterin monophosphate synthase.